Reading from the N-terminus, the 193-residue chain is Proton-translocating ferredoxin:NAD(+) oxidoreductase complex subunit A (193 aa).

6 helical membrane-spanning segments follow: residues 11 to 31, 39 to 59, 62 to 82, 102 to 122, 134 to 154, and 171 to 191; these read AVVV…FFGV, VGMG…AWVV, FVLI…LLIA, MWGI…VPIL, VVNA…MASL, and GVAF…SGMI.

This sequence belongs to the NqrDE/RnfAE family. The complex is composed of six subunits: RnfA, RnfB, RnfC, RnfD, RnfE and RnfG.

The protein localises to the cell membrane. Its function is as follows. Part of a membrane-bound complex that couples electron transfer with translocation of ions across the membrane. Couples electron transfer from reduced ferredoxin to NAD(+) with translocation of H(+) out of the cell. Essential for energy conservation during autotrophic growth. Contributes to ATP synthesis during heterotrophic growth. In Clostridium ljungdahlii (strain ATCC 55383 / DSM 13528 / PETC), this protein is Proton-translocating ferredoxin:NAD(+) oxidoreductase complex subunit A.